A 254-amino-acid chain; its full sequence is Cell division protein DivIB (254 aa).

Topologically, residues Met1–Lys21 are cytoplasmic. A helical membrane pass occupies residues Ile22–Ser42. Over Leu43 to Gln254 the chain is Extracellular. Residues Ser44–Phe112 form the POTRA domain.

This sequence belongs to the FtsQ/DivIB family. DivIB subfamily.

Its subcellular location is the cell membrane. Functionally, cell division protein that may be involved in stabilizing or promoting the assembly of the division complex. This Paenibacillus polymyxa (strain E681) protein is Cell division protein DivIB.